A 501-amino-acid polypeptide reads, in one-letter code: Melianol synthase CYP71BQ5 (501 aa).

A helical transmembrane segment spans residues 1-21; that stretch reads MEFRLPVLLSFLLFFLMLVRH. Cys439 serves as a coordination point for heme.

Belongs to the cytochrome P450 family. The cofactor is heme. As to expression, mainly expressed in petioles and roots, and, to a lower extent, in leaves.

The protein resides in the membrane. It catalyses the reaction dihydroniloticin + 2 reduced [NADPH--hemoprotein reductase] + 2 O2 = melianol + 2 oxidized [NADPH--hemoprotein reductase] + 3 H2O + 2 H(+). It functions in the pathway secondary metabolite biosynthesis; terpenoid biosynthesis. Its function is as follows. Monooxygenase involved in the biosynthesis of limonoids triterpene natural products such as azadirachtin, an antifeedant widely used as bioinsecticide, and possessing many medicinal applications including anti-tumoral, anti-malarial, anti-rheumatic, antibacterial, anti-inflammatory, anti-pyretic and diuretic effects. Catalyzes the conversion of dihydroniloticin to the protolimonoid melianol. The chain is Melianol synthase CYP71BQ5 from Melia azedarach (Chinaberry tree).